The chain runs to 207 residues: Outer-membrane lipoprotein LolB (207 aa).

The N-terminal stretch at 1–21 (MPQPDFRLIRLLPLAALVLTA) is a signal peptide. Cysteine 22 carries the N-palmitoyl cysteine lipid modification. Residue cysteine 22 is the site of S-diacylglycerol cysteine attachment.

It belongs to the LolB family. Monomer.

The protein resides in the cell outer membrane. Functionally, plays a critical role in the incorporation of lipoproteins in the outer membrane after they are released by the LolA protein. The protein is Outer-membrane lipoprotein LolB of Shigella sonnei (strain Ss046).